The primary structure comprises 163 residues: Cyclic pyranopterin monophosphate synthase (163 aa).

Substrate-binding positions include 75–77 and 113–114; these read LCH and ME. Asp128 is a catalytic residue.

This sequence belongs to the MoaC family. As to quaternary structure, homohexamer; trimer of dimers.

It catalyses the reaction (8S)-3',8-cyclo-7,8-dihydroguanosine 5'-triphosphate = cyclic pyranopterin phosphate + diphosphate. Its pathway is cofactor biosynthesis; molybdopterin biosynthesis. Functionally, catalyzes the conversion of (8S)-3',8-cyclo-7,8-dihydroguanosine 5'-triphosphate to cyclic pyranopterin monophosphate (cPMP). The sequence is that of Cyclic pyranopterin monophosphate synthase from Jannaschia sp. (strain CCS1).